Consider the following 374-residue polypeptide: MLTAFRPNSPTAIVVRAASTNAKKLEEIRERLAKGPNFQDFVQNPDNLKSVGENYDGKLRREKGEEQRLRLPPWLKTTIPMGKNYTKIKEQLRELKLSTVCEEARCPNIGECWGGGENGTQTATIMLMGDTCTRGCRFCSVKTARIPPPLDENEPVNTAKAIASWGLDYIVLTSVDRDDLPDGGSKHIAQTVREIKARNSNIFVECLVPDFRGDLDCVETIANCGLDVYAHNIETVEKLTPYVRDRRAHYRQTLRVLTEAKRFNPNLITKSSIMLGLGETDEEIERTMTDLREAGVECLTLGQYMQPTNKHLKVIEYVTPEKFKHWEERGNDLGFLYTASGPLVRSSYKAGEFFISSILANRKANQSKDSAPKN.

[4Fe-4S] cluster contacts are provided by C101, C106, C112, C132, C136, C139, and S347. The Radical SAM core domain occupies 117–336; the sequence is ENGTQTATIM…EERGNDLGFL (220 aa).

Belongs to the radical SAM superfamily. Lipoyl synthase family. [4Fe-4S] cluster serves as cofactor.

It is found in the mitochondrion. It catalyses the reaction [[Fe-S] cluster scaffold protein carrying a second [4Fe-4S](2+) cluster] + N(6)-octanoyl-L-lysyl-[protein] + 2 oxidized [2Fe-2S]-[ferredoxin] + 2 S-adenosyl-L-methionine + 4 H(+) = [[Fe-S] cluster scaffold protein] + N(6)-[(R)-dihydrolipoyl]-L-lysyl-[protein] + 4 Fe(3+) + 2 hydrogen sulfide + 2 5'-deoxyadenosine + 2 L-methionine + 2 reduced [2Fe-2S]-[ferredoxin]. Its pathway is protein modification; protein lipoylation via endogenous pathway; protein N(6)-(lipoyl)lysine from octanoyl-[acyl-carrier-protein]: step 2/2. Functionally, catalyzes the radical-mediated insertion of two sulfur atoms into the C-6 and C-8 positions of the octanoyl moiety bound to the lipoyl domains of lipoate-dependent enzymes, thereby converting the octanoylated domains into lipoylated derivatives. The protein is Lipoyl synthase, mitochondrial of Drosophila pseudoobscura pseudoobscura (Fruit fly).